We begin with the raw amino-acid sequence, 234 residues long: 2,3,4,5-tetrahydropyridine-2,6-dicarboxylate N-acetyltransferase (234 aa).

This sequence belongs to the transferase hexapeptide repeat family. DapH subfamily.

The enzyme catalyses (S)-2,3,4,5-tetrahydrodipicolinate + acetyl-CoA + H2O = L-2-acetamido-6-oxoheptanedioate + CoA. Its pathway is amino-acid biosynthesis; L-lysine biosynthesis via DAP pathway; LL-2,6-diaminopimelate from (S)-tetrahydrodipicolinate (acetylase route): step 1/3. Its function is as follows. Catalyzes the transfer of an acetyl group from acetyl-CoA to tetrahydrodipicolinate. The protein is 2,3,4,5-tetrahydropyridine-2,6-dicarboxylate N-acetyltransferase of Lacticaseibacillus casei (strain BL23) (Lactobacillus casei).